An 887-amino-acid polypeptide reads, in one-letter code: Valine--tRNA ligase (887 aa).

The short motif at 47–57 (PNVTGALHMGH) is the 'HIGH' region element. The short motif at 527 to 531 (KMSKS) is the 'KMSKS' region element. Position 530 (Lys-530) interacts with ATP. Residues 817-885 (LVNVEEEEKR…LLASLEKIRK (69 aa)) adopt a coiled-coil conformation.

It belongs to the class-I aminoacyl-tRNA synthetase family. ValS type 1 subfamily. As to quaternary structure, monomer.

The protein resides in the cytoplasm. It carries out the reaction tRNA(Val) + L-valine + ATP = L-valyl-tRNA(Val) + AMP + diphosphate. In terms of biological role, catalyzes the attachment of valine to tRNA(Val). As ValRS can inadvertently accommodate and process structurally similar amino acids such as threonine, to avoid such errors, it has a 'posttransfer' editing activity that hydrolyzes mischarged Thr-tRNA(Val) in a tRNA-dependent manner. This Geobacter sulfurreducens (strain ATCC 51573 / DSM 12127 / PCA) protein is Valine--tRNA ligase.